The sequence spans 531 residues: CTP synthase (531 aa).

An amidoligase domain region spans residues 1 to 265 (MAKYIFITGG…DRIITERLNL (265 aa)). Ser-13 is a binding site for CTP. Ser-13 is a binding site for UTP. Residue 14–19 (SLGKGI) participates in ATP binding. Residue Tyr-54 coordinates L-glutamine. Asp-71 contacts ATP. Mg(2+) is bound by residues Asp-71 and Glu-139. CTP is bound by residues 146–148 (DIE), 186–191 (KTKPTQ), and Lys-222. UTP is bound by residues 186 to 191 (KTKPTQ) and Lys-222. The Glutamine amidotransferase type-1 domain maps to 290-529 (NVALVGKYVE…IRACLEYKRK (240 aa)). Gly-349 provides a ligand contact to L-glutamine. Cys-376 functions as the Nucleophile; for glutamine hydrolysis in the catalytic mechanism. L-glutamine contacts are provided by residues 377 to 380 (LGMQ), Glu-400, and Arg-457. Residues His-502 and Glu-504 contribute to the active site.

This sequence belongs to the CTP synthase family. As to quaternary structure, homotetramer.

The catalysed reaction is UTP + L-glutamine + ATP + H2O = CTP + L-glutamate + ADP + phosphate + 2 H(+). The enzyme catalyses L-glutamine + H2O = L-glutamate + NH4(+). It carries out the reaction UTP + NH4(+) + ATP = CTP + ADP + phosphate + 2 H(+). It functions in the pathway pyrimidine metabolism; CTP biosynthesis via de novo pathway; CTP from UDP: step 2/2. With respect to regulation, allosterically activated by GTP, when glutamine is the substrate; GTP has no effect on the reaction when ammonia is the substrate. The allosteric effector GTP functions by stabilizing the protein conformation that binds the tetrahedral intermediate(s) formed during glutamine hydrolysis. Inhibited by the product CTP, via allosteric rather than competitive inhibition. Functionally, catalyzes the ATP-dependent amination of UTP to CTP with either L-glutamine or ammonia as the source of nitrogen. Regulates intracellular CTP levels through interactions with the four ribonucleotide triphosphates. The chain is CTP synthase from Aquifex aeolicus (strain VF5).